Consider the following 214-residue polypeptide: MRIILLGAPGAGKGTQAQFIMEKYGIPQISTGDMLRAAVKAQSELGRQAKALMDAGKLVTDELVIALAKERIKQDHCRNGFLLDGFPRTLPQADAMKEVGIAVDYVLEFAVPDSLIIDRIVGRRVHAPSGRVYHVKFNPPKQEGKDDVTGELLTSRKDDQEDTVRKRLVEYHQQTAPLIDYYRKEADAGNTRYFTLDGTRNVSEVSAELAAILG.

10 to 15 (GAGKGT) lines the ATP pocket. Residues 30-59 (STGDMLRAAVKAQSELGRQAKALMDAGKLV) form an NMP region. AMP-binding positions include T31, R36, 57–59 (KLV), 85–88 (GFPR), and Q92. Residues 122 to 159 (GRRVHAPSGRVYHVKFNPPKQEGKDDVTGELLTSRKDD) form an LID region. ATP contacts are provided by residues R123 and 132 to 133 (VY). R156 and R167 together coordinate AMP. ATP is bound at residue R200.

It belongs to the adenylate kinase family. Monomer.

It localises to the cytoplasm. It catalyses the reaction AMP + ATP = 2 ADP. The protein operates within purine metabolism; AMP biosynthesis via salvage pathway; AMP from ADP: step 1/1. Functionally, catalyzes the reversible transfer of the terminal phosphate group between ATP and AMP. Plays an important role in cellular energy homeostasis and in adenine nucleotide metabolism. The polypeptide is Adenylate kinase (Sodalis glossinidius (strain morsitans)).